Reading from the N-terminus, the 218-residue chain is YlmG homolog protein 1-2, chloroplastic (218 aa).

The N-terminal 83 residues, 1–83 (MASFTTNSLA…TRSITTLVLL (83 aa)), are a transit peptide targeting the chloroplast. The next 2 membrane-spanning stretches (helical) occupy residues 133-153 (LTVV…VLMV) and 187-207 (IIPP…AVLG).

Belongs to the YggT family.

The protein localises to the plastid. The protein resides in the chloroplast thylakoid membrane. Its function is as follows. Not required for the biogenesis and accumulation of native cytochrome b6 in the thylakoid membrane. Not functionally involved in the pathway for covalent binding of the c-type heme to cytochrome b6. This Arabidopsis thaliana (Mouse-ear cress) protein is YlmG homolog protein 1-2, chloroplastic.